Reading from the N-terminus, the 448-residue chain is Asparagine--tRNA ligase (448 aa).

The protein belongs to the class-II aminoacyl-tRNA synthetase family. In terms of assembly, homodimer.

It localises to the cytoplasm. The enzyme catalyses tRNA(Asn) + L-asparagine + ATP = L-asparaginyl-tRNA(Asn) + AMP + diphosphate + H(+). The chain is Asparagine--tRNA ligase from Streptococcus suis (strain 98HAH33).